A 260-amino-acid polypeptide reads, in one-letter code: LOB domain-containing protein 6 (260 aa).

The 102-residue stretch at Ser-32 to Leu-133 folds into the LOB domain.

It belongs to the LOB domain-containing protein family. In terms of assembly, interacts with RS2. As to expression, expressed in leaves, leaf primordia, immature ears, immature tassels, whole ovules, silk and husk leaves. Found on the adaxial side of organs.

Its subcellular location is the nucleus. Promotes the switch from proliferation to differentiation in the embryo sac. Negative regulator of cell proliferation in the adaxial side of leaves. Regulates the formation of a symmetric lamina and the establishment of venation. Interacts directly with RS2 (rough sheath 2) to repress some knox homeobox genes. The sequence is that of LOB domain-containing protein 6 (LBD6) from Zea mays (Maize).